Reading from the N-terminus, the 1319-residue chain is Probable membrane antigen 3 (1319 aa).

It is found in the virion tegument. This Equine herpesvirus 2 (strain 86/87) (EHV-2) protein is Probable membrane antigen 3 (3).